The chain runs to 168 residues: Oocyte-secreted protein 2 (168 aa).

The signal sequence occupies residues 1–21; it reads MGVSMALEVLVYLAVLVWTCA.

This sequence belongs to the PLAC1 family. Expressed in ovaries. Highly expressed in the germinal vesicles oocytes and metaphase II oocytes.

The protein resides in the secreted. It localises to the cytoplasm. In Mus musculus (Mouse), this protein is Oocyte-secreted protein 2 (Oosp2).